A 639-amino-acid polypeptide reads, in one-letter code: MALWTSSYPVDTGDRDPSFAWPDTDVPSAGLDESQHDLFAQFLDFEAGHGSTSSATVAVAEPFYMDPSHHHHHPHHHAHGESSTTSSGVSNADEFDFLSSSSNPGAAGYDVDPSTLAMFAQDPAAMYSTTSGVTVSDTELERLEGISLHSPKKGDGTFADRAASPTPVAAPAIAVNATTNAANTTTNARRSKKIVDALSSTFRKATTMRKTRKVSQTLQRAVSPSMENPPMAIKPGSAQSAAPVPRGRRAHRAHTQHALQHQQQQHQHQQQQAHQISESPPILQINTGLANSGGFVAGQFEDPFGGEISPTHAPQPQSQPPQMRYYSQGGLGTPLDSPTRSAAMLQQQWQQQQQQQHNGAQQHQWSAASSQQELWWGGAAGGGAIEAKNIDANMAMHSQHGELPYDVHADAGRVAPNGLLIHMPQPRPGSSSVHDLSLNAHTYLPPPPPVPTENTRSARPPRAPSSGARHHHRTTSSSPMRKQRGTSVSPSPGGNGSGGGTRQSRHSSGGSAASSSQRSASGRVSVPGTPSSSGIKKRRSRDAGSGSFSADEAGGFTLVGGGGGGGGGGGGGGIGFVNFTPNDGGVLMTGVAPSGSSKTKARREKEAQERRRRLSEAAMKAVAAAGGDIRKLREQGFEL.

4 disordered regions span residues 65-97 (MDPS…EFDF), 206-369 (TTMR…SAAS), 418-552 (GLLI…SADE), and 587-613 (LMTG…RRRR). A compositionally biased stretch (basic residues) spans 69 to 78 (HHHHHPHHHA). Composition is skewed to polar residues over residues 81 to 90 (ESSTTSSGVS) and 214 to 226 (VSQT…SPSM). Positions 246 to 255 (RGRRAHRAHT) are enriched in basic residues. Low complexity-rich tracts occupy residues 256–275 (QHAL…QAHQ), 346–369 (QQQW…SAAS), and 506–526 (HSSG…RVSV).

It belongs to the wetA family.

In terms of biological role, brlA, abaA and wetA are pivotal regulators of conidiophore development and conidium maturation. They act individually and together to regulate their own expression and that of numerous other sporulation-specific genes. Acts as a crucial regulator of both conidiation capacity and conidial quality. Plays a role in virulence. This is Developmental regulatory protein wetA from Beauveria bassiana (strain ARSEF 2860) (White muscardine disease fungus).